The sequence spans 610 residues: Butyryl-CoA dehydrogenase Swol_2052 (610 aa).

The active-site Proton acceptor is Glu451.

Belongs to the acyl-CoA dehydrogenase family. FAD serves as cofactor.

The protein resides in the cytoplasm. The enzyme catalyses butanoyl-CoA + oxidized [electron-transfer flavoprotein] + H(+) = (2E)-butenoyl-CoA + reduced [electron-transfer flavoprotein]. It catalyses the reaction a short-chain 2,3-saturated fatty acyl-CoA + oxidized [electron-transfer flavoprotein] + H(+) = a short-chain (2E)-enoyl-CoA + reduced [electron-transfer flavoprotein]. It functions in the pathway lipid metabolism; butanoate metabolism. Involved in syntrophic growth of S.wolfei with butyrate, as part of the butyrate oxidation pathway. Catalyzes the oxidation of butanoyl-CoA to crotonyl-CoA. Probably passes the electrons released by this reaction on to electron-transfer flavoproteins (EtfAB) to finally generate hydrogen and/or formate. In Syntrophomonas wolfei subsp. wolfei (strain DSM 2245B / Goettingen), this protein is Butyryl-CoA dehydrogenase Swol_2052.